A 376-amino-acid polypeptide reads, in one-letter code: Lipoyl synthase, mitochondrial (376 aa).

[4Fe-4S] cluster contacts are provided by C103, C108, C114, C134, C138, C141, and S349. The Radical SAM core domain occupies 119–338 (EHGTQTATIM…EDRGNQLGFL (220 aa)).

Belongs to the radical SAM superfamily. Lipoyl synthase family. The cofactor is [4Fe-4S] cluster.

The protein localises to the mitochondrion. The catalysed reaction is [[Fe-S] cluster scaffold protein carrying a second [4Fe-4S](2+) cluster] + N(6)-octanoyl-L-lysyl-[protein] + 2 oxidized [2Fe-2S]-[ferredoxin] + 2 S-adenosyl-L-methionine + 4 H(+) = [[Fe-S] cluster scaffold protein] + N(6)-[(R)-dihydrolipoyl]-L-lysyl-[protein] + 4 Fe(3+) + 2 hydrogen sulfide + 2 5'-deoxyadenosine + 2 L-methionine + 2 reduced [2Fe-2S]-[ferredoxin]. The protein operates within protein modification; protein lipoylation via endogenous pathway; protein N(6)-(lipoyl)lysine from octanoyl-[acyl-carrier-protein]: step 2/2. Its function is as follows. Catalyzes the radical-mediated insertion of two sulfur atoms into the C-6 and C-8 positions of the octanoyl moiety bound to the lipoyl domains of lipoate-dependent enzymes, thereby converting the octanoylated domains into lipoylated derivatives. In Drosophila ananassae (Fruit fly), this protein is Lipoyl synthase, mitochondrial.